A 633-amino-acid chain; its full sequence is Probable extracellular metalloproteinase 5 (633 aa).

The first 20 residues, M1–A20, serve as a signal peptide directing secretion. The propeptide occupies H21–H244. N-linked (GlcNAc...) asparagine glycosylation occurs at N285. H428 lines the Zn(2+) pocket. E429 is an active-site residue. Position 432 (H432) interacts with Zn(2+). 2 N-linked (GlcNAc...) asparagine glycosylation sites follow: N592 and N621.

It belongs to the peptidase M36 family. Requires Zn(2+) as cofactor.

Its subcellular location is the secreted. In terms of biological role, secreted metalloproteinase probably acting as a virulence factor. The chain is Probable extracellular metalloproteinase 5 (MEP5) from Arthroderma benhamiae (strain ATCC MYA-4681 / CBS 112371) (Trichophyton mentagrophytes).